Here is a 786-residue protein sequence, read N- to C-terminus: Receptor-interacting serine/threonine-protein kinase 4 (786 aa).

In terms of domain architecture, Protein kinase spans 22–286 (FAGWEKVGSG…QEITSETEDL (265 aa)). ATP is bound by residues 28-36 (VGSGGFGQV) and K51. Residue K51 forms a Glycyl lysine isopeptide (Lys-Gly) (interchain with G-Cter in ubiquitin) linkage. D143 (proton acceptor) is an active-site residue. K145 participates in a covalent cross-link: Glycyl lysine isopeptide (Lys-Gly) (interchain with G-Cter in ubiquitin). Disordered regions lie at residues 293 to 328 (EVKD…APPF) and 347 to 378 (QTLE…GVSS). A compositionally biased stretch (basic and acidic residues) spans 295–319 (KDLAHEPGEKSSLESKSEARPESSR). The span at 357 to 378 (RSSSECKLPSSSSGKRLSGVSS) shows a compositional bias: low complexity. ANK repeat units lie at residues 439 to 468 (SSAS…NPNL), 472 to 501 (KGST…SVNA), 505 to 534 (DQWT…SVNE), 538 to 567 (EGRT…DVGL), 571 to 601 (DAWL…SVNA), 605 to 634 (DGRT…DVNI), 638 to 667 (QAQT…GKEA), 671 to 700 (EGYT…DVMA), 704 to 734 (LNQT…DLSD), and 736 to 765 (QGLS…HINL).

The protein belongs to the protein kinase superfamily. TKL Ser/Thr protein kinase family. Interacts with PRKCB. Interacts with TRAF1, TRAF2, TRAF3 and TRAF5. Interacts with BIRC2/c-IAP1, BIRC3/c-IAP2 and XIAP/BIRC4. In terms of processing, may be phosphorylated by MAP3K2 and MAP3K3. Proteolytically cleaved by during Fas-induced apoptosis. Cleavage at Asp-342 and Asp-380. Post-translationally, polyubiquitinated with 'Lys-48' and 'Lys-63'-linked chains by BIRC2/c-IAP1 and BIRC3/c-IAP2, leading to activation of NF-kappa-B. Expressed in the epidermis of the skin (at protein level). Ubiquitously expressed, with an abundant expression in the thymus, bone marrow, pro-B, pre-B and immature B cells and a weak expression in the spleen.

It is found in the cytoplasm. The protein localises to the membrane. The catalysed reaction is L-seryl-[protein] + ATP = O-phospho-L-seryl-[protein] + ADP + H(+). The enzyme catalyses L-threonyl-[protein] + ATP = O-phospho-L-threonyl-[protein] + ADP + H(+). Functionally, serine/threonine protein kinase. Required for embryonic skin development and correct skin homeostasis in adults, via phosphorylation of PKP1 and subsequent promotion of keratinocyte differentiation and cell adhesion. It is a direct transcriptional target of TP63. Plays a role in NF-kappa-B activation. The protein is Receptor-interacting serine/threonine-protein kinase 4 (Ripk4) of Mus musculus (Mouse).